We begin with the raw amino-acid sequence, 617 residues long: Cytoplasmic polyadenylation element-binding protein 1 (617 aa).

The tract at residues 1–38 (MQSQLKACGDAPAPSCSLHHRRTISKKPSNGGNSGGGG) is disordered. RRM domains lie at 273–377 (RKVF…AWRL) and 394–465 (RTVF…HADT). 2 disordered regions span residues 534-568 (DQTR…QNVT) and 592-617 (NQNN…AIGY). The span at 542–563 (PPHHSTSHYHHRSTPSHHHNHT) shows a compositional bias: basic residues.

As to quaternary structure, interacts with fbf-1.

Its function is as follows. Cytoplasmic polyadenylation element binding protein that binds to and regulates the translation of specific mRNAs. Essential for progression through meiosis. Involved in spermatogenesis. This chain is Cytoplasmic polyadenylation element-binding protein 1 (cpb-1), found in Caenorhabditis japonica.